The primary structure comprises 76 residues: Kappa-actitoxin-Avd4e (76 aa).

The N-terminal stretch at 1 to 19 (MNKALFLCLVVLCAAVVFA) is a signal peptide. The propeptide occupies 20 to 31 (AEDLQKAKHAPF). 3 cysteine pairs are disulfide-bonded: C37/C72, C39/C65, and C55/C73. The Cell attachment site signature appears at 45 to 47 (RGD).

The protein belongs to the sea anemone type 3 (BDS) potassium channel toxin family. In terms of tissue distribution, moderately expressed in the ectodermal tissue from the distal and proximal tentacles, body wall, and oral disk.

It localises to the secreted. The protein localises to the nematocyst. In terms of biological role, is member of a fraction that shows antiangiogenic activity, since it inhibits human microvascular endothelial cells (HMEC) tubulogenesis. This protein could be a kunitz-type inhibitor with a RGD motif that could block angiogenesis in binding on integrins. Blocks Kv3 voltage-gated potassium channels. Reduces blood pressure. In Anemonia viridis (Snakelocks anemone), this protein is Kappa-actitoxin-Avd4e.